The primary structure comprises 221 residues: 2-amino-5-formylamino-6-ribosylaminopyrimidin-4(3H)-one 5'-monophosphate deformylase (221 aa).

Residues E29, H31, D40, and H108 each coordinate Fe cation.

This sequence belongs to the creatininase superfamily. FAPy deformylase family. Homodimer. Fe(2+) is required as a cofactor. Requires Zn(2+) as cofactor.

The enzyme catalyses 2-amino-5-formylamino-6-(5-phospho-D-ribosylamino)pyrimidin-4(3H)-one + H2O = 2,5-diamino-6-(1-D-ribosylamino)pyrimidin-4(3H)-one 5'-phosphate + formate + H(+). It functions in the pathway cofactor biosynthesis; coenzyme F420 biosynthesis. It participates in cofactor biosynthesis; riboflavin biosynthesis. Catalyzes the hydrolysis of the formamide of 2-amino-5-formylamino-6-ribosylamino-4(3H)-pyrimidinone 5'-monophosphate (FAPy) to form 2,5-diamino-6-ribosylamino-4(3H)-pyrimidinone 5'-phosphate (APy). This is 2-amino-5-formylamino-6-ribosylaminopyrimidin-4(3H)-one 5'-monophosphate deformylase from Methanococcus maripaludis (strain DSM 14266 / JCM 13030 / NBRC 101832 / S2 / LL).